A 361-amino-acid chain; its full sequence is Protein RecA (361 aa).

77–84 is a binding site for ATP; that stretch reads GPESSGKT.

This sequence belongs to the RecA family.

The protein resides in the cytoplasm. In terms of biological role, can catalyze the hydrolysis of ATP in the presence of single-stranded DNA, the ATP-dependent uptake of single-stranded DNA by duplex DNA, and the ATP-dependent hybridization of homologous single-stranded DNAs. It interacts with LexA causing its activation and leading to its autocatalytic cleavage. This is Protein RecA from Sinorhizobium medicae (strain WSM419) (Ensifer medicae).